An 87-amino-acid polypeptide reads, in one-letter code: Small ribosomal subunit protein bS20 (87 aa).

The disordered stretch occupies residues 1-20; sequence MANIKSQIKRNKTNEKARLR.

It belongs to the bacterial ribosomal protein bS20 family.

Its function is as follows. Binds directly to 16S ribosomal RNA. This Corynebacterium efficiens (strain DSM 44549 / YS-314 / AJ 12310 / JCM 11189 / NBRC 100395) protein is Small ribosomal subunit protein bS20.